A 372-amino-acid chain; its full sequence is Anhydro-N-acetylmuramic acid kinase (372 aa).

21 to 28 serves as a coordination point for ATP; that stretch reads GTSMDGVD.

This sequence belongs to the anhydro-N-acetylmuramic acid kinase family.

It catalyses the reaction 1,6-anhydro-N-acetyl-beta-muramate + ATP + H2O = N-acetyl-D-muramate 6-phosphate + ADP + H(+). It participates in amino-sugar metabolism; 1,6-anhydro-N-acetylmuramate degradation. The protein operates within cell wall biogenesis; peptidoglycan recycling. Catalyzes the specific phosphorylation of 1,6-anhydro-N-acetylmuramic acid (anhMurNAc) with the simultaneous cleavage of the 1,6-anhydro ring, generating MurNAc-6-P. Is required for the utilization of anhMurNAc either imported from the medium or derived from its own cell wall murein, and thus plays a role in cell wall recycling. The chain is Anhydro-N-acetylmuramic acid kinase from Bordetella avium (strain 197N).